The chain runs to 330 residues: 7,8-didemethyl-8-hydroxy-5-deazariboflavin synthase (330 aa).

One can recognise a Radical SAM core domain in the interval 5–245 (VTFSRNVFIP…SDVAVQVAPN (241 aa)). 3 residues coordinate [4Fe-4S] cluster: cysteine 19, cysteine 23, and cysteine 26.

It belongs to the radical SAM superfamily. CofG family. Consists of two subunits, CofG and CofH. It depends on [4Fe-4S] cluster as a cofactor.

The enzyme catalyses 5-amino-5-(4-hydroxybenzyl)-6-(D-ribitylimino)-5,6-dihydrouracil + S-adenosyl-L-methionine = 7,8-didemethyl-8-hydroxy-5-deazariboflavin + 5'-deoxyadenosine + L-methionine + NH4(+) + H(+). It participates in cofactor biosynthesis; coenzyme F0 biosynthesis. In terms of biological role, catalyzes the radical-mediated synthesis of 7,8-didemethyl-8-hydroxy-5-deazariboflavin from 5-amino-5-(4-hydroxybenzyl)-6-(D-ribitylimino)-5,6-dihydrouracil. This is 7,8-didemethyl-8-hydroxy-5-deazariboflavin synthase from Methanococcoides burtonii (strain DSM 6242 / NBRC 107633 / OCM 468 / ACE-M).